The sequence spans 538 residues: indole-2-monooxygenase (538 aa).

The helical transmembrane segment at 22 to 42 threads the bilayer; the sequence is ALLLAIPFSLLLLPLLLRYLA. Cys-481 is a heme binding site.

This sequence belongs to the cytochrome P450 family. Heme is required as a cofactor.

It localises to the membrane. It carries out the reaction indole + reduced [NADPH--hemoprotein reductase] + O2 = indolin-2-one + oxidized [NADPH--hemoprotein reductase] + H2O + H(+). The protein operates within secondary metabolite biosynthesis; 2,4-dihydroxy-1,4-benzoxazin-3-one biosynthesis; 2,4-dihydroxy-1,4-benzoxazin-3-one from indoleglycerol phosphate: step 2/5. Functionally, catalyzes the conversion of indole to indolin-2-one. This is indole-2-monooxygenase (CYP71C4) from Zea mays (Maize).